The sequence spans 110 residues: MPELKTISLFMLTALAEIIGCYLPYLWLREGKTIWLLVPAALSLAVFTWLLTLHPTASGRVYAAYGGVYIFMAVLWLWIVDGIRPTTWDMIGSAVALLGMAIIMFAPRTT.

4 helical membrane-spanning segments follow: residues 7 to 27 (ISLF…PYLW), 33 to 53 (TIWL…LLTL), 63 to 83 (AAYG…VDGI), and 87 to 107 (TWDM…MFAP).

It belongs to the UPF0060 family.

It localises to the cell inner membrane. The sequence is that of UPF0060 membrane protein Mmwyl1_1139 from Marinomonas sp. (strain MWYL1).